Consider the following 170-residue polypeptide: Lipoprotein signal peptidase (170 aa).

The next 3 helical transmembrane spans lie at 5–25 (VYHQ…LDQG), 70–90 (WFFT…ICRV), and 98–118 (AFAL…RIIH). Catalysis depends on residues Asp-123 and Asp-141. The helical transmembrane segment at 137-157 (FNLADAAISLGAMVLIADLFI) threads the bilayer.

It belongs to the peptidase A8 family.

The protein localises to the cell inner membrane. It carries out the reaction Release of signal peptides from bacterial membrane prolipoproteins. Hydrolyzes -Xaa-Yaa-Zaa-|-(S,diacylglyceryl)Cys-, in which Xaa is hydrophobic (preferably Leu), and Yaa (Ala or Ser) and Zaa (Gly or Ala) have small, neutral side chains.. The protein operates within protein modification; lipoprotein biosynthesis (signal peptide cleavage). In terms of biological role, this protein specifically catalyzes the removal of signal peptides from prolipoproteins. The chain is Lipoprotein signal peptidase from Cellvibrio japonicus (strain Ueda107) (Pseudomonas fluorescens subsp. cellulosa).